Consider the following 41-residue polypeptide: MLDFKHFKLLYKEITGATTKTPKKEATLNTILENQEYSKNT.

This is an uncharacterized protein from Dictyostelium discoideum (Social amoeba).